A 547-amino-acid polypeptide reads, in one-letter code: ATP synthase subunit alpha (547 aa).

172 to 179 (GDRKTGKT) provides a ligand contact to ATP.

It belongs to the ATPase alpha/beta chains family. F-type ATPases have 2 components, CF(1) - the catalytic core - and CF(0) - the membrane proton channel. CF(1) has five subunits: alpha(3), beta(3), gamma(1), delta(1), epsilon(1). CF(0) has three main subunits: a(1), b(2) and c(9-12). The alpha and beta chains form an alternating ring which encloses part of the gamma chain. CF(1) is attached to CF(0) by a central stalk formed by the gamma and epsilon chains, while a peripheral stalk is formed by the delta and b chains.

The protein localises to the cell membrane. The catalysed reaction is ATP + H2O + 4 H(+)(in) = ADP + phosphate + 5 H(+)(out). Its function is as follows. Produces ATP from ADP in the presence of a proton gradient across the membrane. The alpha chain is a regulatory subunit. This chain is ATP synthase subunit alpha, found in Rhodococcus jostii (strain RHA1).